Consider the following 445-residue polypeptide: Argininosuccinate synthase (445 aa).

ATP is bound by residues alanine 17–serine 25 and alanine 43. Tyrosine 99 serves as a coordination point for L-citrulline. ATP contacts are provided by glycine 129 and threonine 131. Positions 131, 135, and 136 each coordinate L-aspartate. Position 135 (asparagine 135) interacts with L-citrulline. Aspartate 136 is a binding site for ATP. Positions 139 and 192 each coordinate L-citrulline. Aspartate 194 is a binding site for ATP. Residues threonine 201, glutamate 203, and glutamate 280 each contribute to the L-citrulline site.

The protein belongs to the argininosuccinate synthase family. Type 2 subfamily. As to quaternary structure, homotetramer.

The protein resides in the cytoplasm. The catalysed reaction is L-citrulline + L-aspartate + ATP = 2-(N(omega)-L-arginino)succinate + AMP + diphosphate + H(+). Its pathway is amino-acid biosynthesis; L-arginine biosynthesis; L-arginine from L-ornithine and carbamoyl phosphate: step 2/3. The protein is Argininosuccinate synthase of Acidobacterium capsulatum (strain ATCC 51196 / DSM 11244 / BCRC 80197 / JCM 7670 / NBRC 15755 / NCIMB 13165 / 161).